We begin with the raw amino-acid sequence, 396 residues long: Phosphoglycerate kinase (396 aa).

Substrate contacts are provided by residues 21 to 23 (DFN), Arg-36, 59 to 62 (HLGK), Arg-119, and Arg-156. ATP contacts are provided by residues Lys-206, Gly-294, Glu-325, and 352–355 (GGDS).

Belongs to the phosphoglycerate kinase family. Monomer.

The protein localises to the cytoplasm. The catalysed reaction is (2R)-3-phosphoglycerate + ATP = (2R)-3-phospho-glyceroyl phosphate + ADP. It participates in carbohydrate degradation; glycolysis; pyruvate from D-glyceraldehyde 3-phosphate: step 2/5. The chain is Phosphoglycerate kinase from Staphylococcus aureus (strain bovine RF122 / ET3-1).